We begin with the raw amino-acid sequence, 372 residues long: NAD(P)H-quinone oxidoreductase subunit 1 (372 aa).

Helical transmembrane passes span 27–47 (LIWLPLPMLLVLTAAMVGVLV), 97–117 (LLFTLGPVLVLVPVILSWLIV), 128–148 (VGIGIFLWISLSSIQPIGLLM), 166–186 (AAQSISYEIPLALAVLAVVMM), 204–224 (LLSWNVWRQPVGFLIFWICAL), 266–286 (VLSSLLVAVLYLGGWGFPIPV), 308–328 (SVGIVMTVLKAYLLVFLAILL), and 347–367 (FLLPIALGNLLITAALKLAFP).

Belongs to the complex I subunit 1 family. As to quaternary structure, NDH-1 is composed of at least 11 different subunits.

It localises to the cellular thylakoid membrane. It catalyses the reaction a plastoquinone + NADH + (n+1) H(+)(in) = a plastoquinol + NAD(+) + n H(+)(out). It carries out the reaction a plastoquinone + NADPH + (n+1) H(+)(in) = a plastoquinol + NADP(+) + n H(+)(out). Functionally, NDH-1 shuttles electrons from an unknown electron donor, via FMN and iron-sulfur (Fe-S) centers, to quinones in the respiratory and/or the photosynthetic chain. The immediate electron acceptor for the enzyme in this species is believed to be plastoquinone. Couples the redox reaction to proton translocation, and thus conserves the redox energy in a proton gradient. This is NAD(P)H-quinone oxidoreductase subunit 1 from Prochlorococcus marinus (strain MIT 9313).